Reading from the N-terminus, the 403-residue chain is Ubiquitin-like modifier-activating enzyme 5 (403 aa).

ATP contacts are provided by G81, D102, K125, N148, and N182. C224 and C227 together coordinate Zn(2+). C248 serves as the catalytic Glycyl thioester intermediate. Zn(2+) is bound by residues C301 and C306. Positions 333–345 match the UFM1-interacting sequence (UIS) motif; that stretch reads VVHEDNEWGIELV. The linker stretch occupies residues 346–376; that stretch reads SEVSEEELKNSSGPVPTLPEGITVAYTVPKK. A phosphoserine mark is found at S357 and S392. The short motif at 388–403 is the UFC1-binding sequence (UFC) element; the sequence is DSGESLEDLMARMKNM.

The protein belongs to the ubiquitin-activating E1 family. UBA5 subfamily. In terms of assembly, homodimer; homodimerization is required for UFM1 activation. Interacts (via UIS motif) with UFM1; binds UFM1 via a trans-binding mechanism in which UFM1 interacts with distinct sites in both subunits of the UBA5 homodimer. Interacts (via C-terminus) with UFC1. Interacts (via UIS motif) with GABARAPL2 and, with lower affinity, with GABARAP and GABARAPL1.

It localises to the cytoplasm. It is found in the nucleus. The protein resides in the endoplasmic reticulum membrane. The protein localises to the golgi apparatus. Functionally, E1-like enzyme which specifically catalyzes the first step in ufmylation. Activates UFM1 by first adenylating its C-terminal glycine residue with ATP, and thereafter linking this residue to the side chain of a cysteine residue in E1, yielding a UFM1-E1 thioester and free AMP. Activates UFM1 via a trans-binding mechanism, in which UFM1 interacts with distinct sites in both subunits of the UBA5 homodimer. Trans-binding also promotes stabilization of the UBA5 homodimer, and enhances ATP-binding. Transfer of UFM1 from UBA5 to the E2-like enzyme UFC1 also takes place using a trans mechanism. Ufmylation plays a key role in various processes, such as ribosome recycling, response to DNA damage, interferon response or reticulophagy (also called ER-phagy). Ufmylation is essential for erythroid differentiation of both megakaryocytes and erythrocytes. This is Ubiquitin-like modifier-activating enzyme 5 from Mus musculus (Mouse).